The primary structure comprises 213 residues: MGREFLSLFDHWADSYDDTVSGHDEQYEEVFRRYSVILKEIVHRAGQHVLEFGSGTGNLTAALLAADKNVFGVEPSDAMKKAALQKGIPDVFHDGDFLSFPAPPFEPDTIVSSYAFHHLTDEEKKQAIHTYSNILHSDGKIVFADTMFQNQSAHQAEIDKAKAAGFDQLAEDLETEYYPSIDVLKQIFEEEGFSTSFHQMNDFVWIVEAKKRE.

Residues G53, E74, and D96 each coordinate S-adenosyl-L-methionine.

Belongs to the methyltransferase superfamily. YrrT family.

Could be a S-adenosyl-L-methionine-dependent methyltransferase. This is an uncharacterized protein from Bacillus pumilus (strain SAFR-032).